A 341-amino-acid polypeptide reads, in one-letter code: GDP-fucose transporter 1 (341 aa).

The next 10 helical transmembrane spans lie at 17 to 37 (LVIG…LAIT), 41 to 61 (YPGL…YLLG), 71 to 91 (FTWD…LAIF), 103 to 123 (DTFI…DTVF), 132 to 152 (LTFL…ATDS), 156 to 176 (LTAY…MVYI), 187 to 207 (IWGL…VFWF), 231 to 251 (AFSS…FGFA), 260 to 280 (AFTV…VLIW), and 283 to 303 (HATP…VGYQ). Positions 316-341 (SEKDSEKGEEDEELTQLVPGKLASVV) are disordered.

This sequence belongs to the nucleotide-sugar transporter family. GDP-Mannose:GMP antiporter (GMA) (TC 2.A.7.13) subfamily. Ubiquitous.

The protein resides in the golgi apparatus membrane. Functionally, acts as the major nucleotide-sugar transporter for the import of GDP-Fucose into the Golgi lumen. Transports GDP-Fucose in a strict counter-exchange mode. Is required for proper plant growth and development. Also acts as a GDP-mannose transporter that may be involved in the import of GDP-mannose from the cytoplasm into the Golgi lumen. This is GDP-fucose transporter 1 from Arabidopsis thaliana (Mouse-ear cress).